A 212-amino-acid polypeptide reads, in one-letter code: Fibrillarin-like rRNA/tRNA 2'-O-methyltransferase (212 aa).

Residues 76 to 77, 94 to 95, 119 to 120, and 139 to 142 contribute to the S-adenosyl-L-methionine site; these read TT, EL, DA, and DIAQ.

The protein belongs to the methyltransferase superfamily. Fibrillarin family. Interacts with nop5. Component of box C/D small ribonucleoprotein (sRNP) particles that contain rpl7ae, FlpA and nop5, plus a guide RNA.

In terms of biological role, involved in pre-rRNA and tRNA processing. Utilizes the methyl donor S-adenosyl-L-methionine to catalyze the site-specific 2'-hydroxyl methylation of ribose moieties in rRNA and tRNA. Site specificity is provided by a guide RNA that base pairs with the substrate. Methylation occurs at a characteristic distance from the sequence involved in base pairing with the guide RNA. This Picrophilus torridus (strain ATCC 700027 / DSM 9790 / JCM 10055 / NBRC 100828 / KAW 2/3) protein is Fibrillarin-like rRNA/tRNA 2'-O-methyltransferase.